A 507-amino-acid polypeptide reads, in one-letter code: ATP synthase subunit alpha, chloroplastic (507 aa).

Residue 170–177 (GDRQTGKT) participates in ATP binding.

Belongs to the ATPase alpha/beta chains family. F-type ATPases have 2 components, CF(1) - the catalytic core - and CF(0) - the membrane proton channel. CF(1) has five subunits: alpha(3), beta(3), gamma(1), delta(1), epsilon(1). CF(0) has four main subunits: a, b, b' and c.

The protein resides in the plastid. Its subcellular location is the chloroplast thylakoid membrane. The enzyme catalyses ATP + H2O + 4 H(+)(in) = ADP + phosphate + 5 H(+)(out). In terms of biological role, produces ATP from ADP in the presence of a proton gradient across the membrane. The alpha chain is a regulatory subunit. This Physcomitrium patens (Spreading-leaved earth moss) protein is ATP synthase subunit alpha, chloroplastic.